Here is a 245-residue protein sequence, read N- to C-terminus: MSSSELKALLTAPKSVQQAELERINRFLAGLTAQERVLWGLAYLPGNHALSSSFGIQAAVMLHMVSQVQSDIPVILTDTGYLFPETYQFIDQLTERLSLNLKVYQAPITSAWQEARFGQLWEQGVEGLERYNRLNKVEPMQRALAELEVGTWFAGLRRSQSSTREELPILAIHGSRFKLLPIIEWSNKDVHLYLTQFDLPYHPLWEQGYVSVGDTHSSKPLELGMTEEETRFNGLKRECGLHYEI.

C239 serves as the catalytic Nucleophile; cysteine thiosulfonate intermediate.

This sequence belongs to the PAPS reductase family. CysH subfamily.

Its subcellular location is the cytoplasm. It carries out the reaction [thioredoxin]-disulfide + sulfite + adenosine 3',5'-bisphosphate + 2 H(+) = [thioredoxin]-dithiol + 3'-phosphoadenylyl sulfate. The protein operates within sulfur metabolism; hydrogen sulfide biosynthesis; sulfite from sulfate: step 3/3. In terms of biological role, catalyzes the formation of sulfite from phosphoadenosine 5'-phosphosulfate (PAPS) using thioredoxin as an electron donor. This is Phosphoadenosine 5'-phosphosulfate reductase from Shewanella oneidensis (strain ATCC 700550 / JCM 31522 / CIP 106686 / LMG 19005 / NCIMB 14063 / MR-1).